The chain runs to 909 residues: Protein translocase subunit SecA (909 aa).

ATP is bound by residues glutamine 87 and 105–109 (GEGKT). Positions 246 to 265 (LEQQEKEDEEGKNGDGDYTI) are disordered. The segment covering 254–265 (EEGKNGDGDYTI) has biased composition (basic and acidic residues). Position 512 (aspartate 512) interacts with ATP. Basic and acidic residues predominate over residues 834 to 858 (ESDVEAVEEQRRQADEQPKQYEHET). The disordered stretch occupies residues 834–899 (ESDVEAVEEQ…NDPCPCGSGL (66 aa)). A compositionally biased stretch (low complexity) spans 859 to 875 (ASATQAPEQAPEAAPAA). 4 residues coordinate Zn(2+): cysteine 893, cysteine 895, cysteine 904, and histidine 905.

The protein belongs to the SecA family. In terms of assembly, monomer and homodimer. Part of the essential Sec protein translocation apparatus which comprises SecA, SecYEG and auxiliary proteins SecDF-YajC and YidC. Requires Zn(2+) as cofactor.

It localises to the cell inner membrane. It is found in the cytoplasm. It carries out the reaction ATP + H2O + cellular proteinSide 1 = ADP + phosphate + cellular proteinSide 2.. Its function is as follows. Part of the Sec protein translocase complex. Interacts with the SecYEG preprotein conducting channel. Has a central role in coupling the hydrolysis of ATP to the transfer of proteins into and across the cell membrane, serving both as a receptor for the preprotein-SecB complex and as an ATP-driven molecular motor driving the stepwise translocation of polypeptide chains across the membrane. The polypeptide is Protein translocase subunit SecA (Pseudoalteromonas atlantica (strain T6c / ATCC BAA-1087)).